The primary structure comprises 810 residues: F-BAR domain only protein 2 (810 aa).

Residues 3–250 (MAYFVENFWG…NMANTTVESL (248 aa)) form the F-BAR domain. The mediates dimerization and binding to membranes enriched in Pi(4,5)-P2 and induces their tubulation stretch occupies residues 3–274 (MAYFVENFWG…PGLIEFEECD (272 aa)). Residues 87 to 156 (HLDLVRKLQE…CVEQERLKKE (70 aa)) adopt a coiled-coil conformation. Residue K297 forms a Glycyl lysine isopeptide (Lys-Gly) (interchain with G-Cter in SUMO2) linkage. The interval 301–352 (DAESVECPDADSLNIPDVDEEGYSIKPETNQNDTKENHFYSSSDSDSEDEEP) is disordered. S312 carries the phosphoserine modification. Phosphothreonine is present on T385. Residues S387, S394, and S403 each carry the phosphoserine modification. The interval 403-537 (SNEELTKSKP…VSRGPSPVSL (135 aa)) is disordered. The span at 433 to 456 (PSLDSSSSSSLTSSSSARPTTPLS) shows a compositional bias: low complexity. Phosphoserine occurs at positions 488, 493, 496, 508, 510, 511, and 533. Residues 502-521 (PLARAESSSSISSSASLSAA) show a composition bias toward low complexity. Positions 521–810 (ANTPTVGVSR…FATGRYLADC (290 aa)) are mediates interaction with DAB2, EPS15, EPS15R and ITSN1. An MHD domain is found at 542 to 809 (TLPVAVALTE…RFATGRYLAD (268 aa)).

This sequence belongs to the FCHO family. In terms of assembly, homodimer; disulfide-linked. May form homotetramer. Interacts with AP2A1. Interacts with EPS15, EPS15R, ITSN1 and ITSN2; recruit those scaffolding proteins which in turn may interact with the adaptor protein complex AP-2 at the plasma membrane. Interacts with DAB2 (via DPF motifs); mediates LDL receptor/LDLR endocytosis. In terms of processing, ubiquitinated. Mainly undergoes monoubiquitination but also polyubiquitination.

The protein localises to the membrane. It is found in the clathrin-coated pit. Functionally, functions in an early step of clathrin-mediated endocytosis. Has both a membrane binding/bending activity and the ability to recruit proteins essential to the formation of functional clathrin-coated pits. Has a lipid-binding activity with a preference for membranes enriched in phosphatidylserine and phosphoinositides (Pi(4,5) biphosphate) like the plasma membrane. Its membrane-bending activity might be important for the subsequent action of clathrin and adaptors in the formation of clathrin-coated vesicles. Involved in adaptor protein complex AP-2-dependent endocytosis of the transferrin receptor, it also functions in the AP-2-independent endocytosis of the LDL receptor. The polypeptide is F-BAR domain only protein 2 (FCHO2) (Pongo abelii (Sumatran orangutan)).